Consider the following 497-residue polypeptide: Probable malate:quinone oxidoreductase (497 aa).

It belongs to the MQO family. FAD is required as a cofactor.

The enzyme catalyses (S)-malate + a quinone = a quinol + oxaloacetate. Its pathway is carbohydrate metabolism; tricarboxylic acid cycle; oxaloacetate from (S)-malate (quinone route): step 1/1. The polypeptide is Probable malate:quinone oxidoreductase (Rhodopseudomonas palustris (strain TIE-1)).